A 227-amino-acid polypeptide reads, in one-letter code: UPF0758 protein Psyc_1834 (227 aa).

The MPN domain maps to 102–224 (GLGRSQMVKD…TLSYAENCLA (123 aa)). Zn(2+) is bound by residues His173, His175, and Asp186. Residues 173–186 (HNHPHTDATPSTAD) carry the JAMM motif motif.

It belongs to the UPF0758 family.

This is UPF0758 protein Psyc_1834 from Psychrobacter arcticus (strain DSM 17307 / VKM B-2377 / 273-4).